The following is a 218-amino-acid chain: Cytochrome c biogenesis ATP-binding export protein CcmA (218 aa).

The ABC transporter domain maps to 2–217; sequence LEAKNLTCIR…KSCLSACCAV (216 aa). Residue 34–41 participates in ATP binding; sequence GPNGAGKT.

The protein belongs to the ABC transporter superfamily. CcmA exporter (TC 3.A.1.107) family. In terms of assembly, the complex is composed of two ATP-binding proteins (CcmA) and two transmembrane proteins (CcmB).

The protein localises to the cell inner membrane. The enzyme catalyses heme b(in) + ATP + H2O = heme b(out) + ADP + phosphate + H(+). Its function is as follows. Part of the ABC transporter complex CcmAB involved in the biogenesis of c-type cytochromes; once thought to export heme, this seems not to be the case, but its exact role is uncertain. Responsible for energy coupling to the transport system. The sequence is that of Cytochrome c biogenesis ATP-binding export protein CcmA from Yersinia pestis.